We begin with the raw amino-acid sequence, 147 residues long: Large ribosomal subunit protein uL15 (147 aa).

The disordered stretch occupies residues 16–63; it reads SSRARVGRGIGSGLGKTAGRGHKGSFARKGGGKIKPGFEGGQTPMQRR. Gly residues predominate over residues 23 to 33; that stretch reads RGIGSGLGKTA. Residues 34-47 are compositionally biased toward basic residues; it reads GRGHKGSFARKGGG.

It belongs to the universal ribosomal protein uL15 family. In terms of assembly, part of the 50S ribosomal subunit.

In terms of biological role, binds to the 23S rRNA. The protein is Large ribosomal subunit protein uL15 of Xylella fastidiosa (strain Temecula1 / ATCC 700964).